The primary structure comprises 300 residues: B3 domain-containing protein At5g57720 (300 aa).

Positions 11-105 form a DNA-binding region, TF-B3; that stretch reads PDFLKIFNSH…SFWVRIHRNG (95 aa). The disordered stretch occupies residues 115-142; that stretch reads KIQEISDDEDETNGDGDPHMEEEGDTDE. Residues 119–129 show a composition bias toward acidic residues; it reads ISDDEDETNGD.

It is found in the nucleus. The polypeptide is B3 domain-containing protein At5g57720 (Arabidopsis thaliana (Mouse-ear cress)).